Here is a 280-residue protein sequence, read N- to C-terminus: Protein lyl-1 (280 aa).

The tract at residues Met-1–Val-60 is disordered. Residues Ser-25–Pro-40 are compositionally biased toward pro residues. A bHLH domain is found at Ala-150–Leu-202. Residues Ala-214–Arg-280 form a disordered region. The segment covering Arg-229–Ala-245 has biased composition (basic and acidic residues). Positions Pro-257–Pro-267 are enriched in low complexity. Residues Ser-260 and Ser-276 each carry the phosphoserine modification.

As to quaternary structure, efficient DNA binding requires dimerization with another bHLH protein.

It is found in the nucleus. In Homo sapiens (Human), this protein is Protein lyl-1 (LYL1).